We begin with the raw amino-acid sequence, 557 residues long: Venom carboxylesterase-6 (557 aa).

A signal peptide spans 1-21 (MYMLKLSYILLFLGFVKFSWQ). Cysteine 88 and cysteine 108 form a disulfide bridge. An N-linked (GlcNAc...) asparagine glycan is attached at asparagine 145. Residue serine 212 is the Acyl-ester intermediate of the active site. Cysteine 264 and cysteine 275 are oxidised to a cystine. Glutamate 341 (charge relay system) is an active-site residue. The N-linked (GlcNAc...) asparagine glycan is linked to asparagine 374. Histidine 464 functions as the Charge relay system in the catalytic mechanism. Asparagine 478, asparagine 528, and asparagine 542 each carry an N-linked (GlcNAc...) asparagine glycan.

It belongs to the type-B carboxylesterase/lipase family. As to expression, expressed by the venom gland.

It is found in the secreted. It carries out the reaction a carboxylic ester + H2O = an alcohol + a carboxylate + H(+). This Apis mellifera (Honeybee) protein is Venom carboxylesterase-6.